The chain runs to 338 residues: Malate dehydrogenase, mitochondrial (338 aa).

The transit peptide at Met1–Asn24 directs the protein to the mitochondrion. Residues Gly31–Gly37 and Asp57 contribute to the NAD(+) site. An O-linked (GlcNAc) serine glycan is attached at Ser33. N6-acetyllysine; alternate occurs at positions 78 and 91. 2 positions are modified to N6-succinyllysine; alternate: Lys78 and Lys91. Positions 104 and 110 each coordinate substrate. NAD(+)-binding positions include Asn117 and Ile140–Asn142. Asn142 contributes to the substrate binding site. At Lys165 the chain carries N6-acetyllysine. Residue Arg176 coordinates substrate. Lys185 bears the N6-acetyllysine; alternate mark. Lys185 carries the N6-succinyllysine; alternate modification. His200 serves as the catalytic Proton acceptor. Lys203 carries the N6-succinyllysine modification. 2 positions are modified to N6-acetyllysine; alternate: Lys215 and Lys239. Lys215 and Lys239 each carry N6-succinyllysine; alternate. An N6-malonyllysine; alternate modification is found at Lys239. Ser246 is modified (phosphoserine). Met251 serves as a coordination point for NAD(+). Lys269 is subject to N6-succinyllysine. N6-acetyllysine; alternate occurs at positions 296, 301, 307, 314, and 324. An N6-succinyllysine; alternate mark is found at Lys296, Lys301, Lys307, Lys314, and Lys324. At Lys307 the chain carries N6-malonyllysine; alternate. Ser326 bears the Phosphoserine mark. Lys328, Lys329, and Lys335 each carry N6-acetyllysine; alternate. At Lys328 the chain carries N6-succinyllysine; alternate. Lys329 bears the N6-malonyllysine; alternate mark. Residue Lys335 is modified to N6-succinyllysine; alternate.

Belongs to the LDH/MDH superfamily. MDH type 1 family. As to quaternary structure, homodimer. Acetylation is enhanced after treatment either with trichostin A (TCA) or with nicotinamide (NAM) with the appearance of tri- and tetraacetylations. Glucose also increases acetylation.

Its subcellular location is the mitochondrion matrix. It carries out the reaction (S)-malate + NAD(+) = oxaloacetate + NADH + H(+). With respect to regulation, enzyme activity is enhanced by acetylation. This chain is Malate dehydrogenase, mitochondrial (MDH2), found in Sus scrofa (Pig).